The following is a 298-amino-acid chain: Lipoyl synthase (298 aa).

[4Fe-4S] cluster contacts are provided by Cys40, Cys45, Cys51, Cys67, Cys71, Cys74, and Ser280. Residues 53-269 (AVRRTATFMI…KEIAMAKGFS (217 aa)) enclose the Radical SAM core domain.

Belongs to the radical SAM superfamily. Lipoyl synthase family. The cofactor is [4Fe-4S] cluster.

It localises to the cytoplasm. The enzyme catalyses [[Fe-S] cluster scaffold protein carrying a second [4Fe-4S](2+) cluster] + N(6)-octanoyl-L-lysyl-[protein] + 2 oxidized [2Fe-2S]-[ferredoxin] + 2 S-adenosyl-L-methionine + 4 H(+) = [[Fe-S] cluster scaffold protein] + N(6)-[(R)-dihydrolipoyl]-L-lysyl-[protein] + 4 Fe(3+) + 2 hydrogen sulfide + 2 5'-deoxyadenosine + 2 L-methionine + 2 reduced [2Fe-2S]-[ferredoxin]. It functions in the pathway protein modification; protein lipoylation via endogenous pathway; protein N(6)-(lipoyl)lysine from octanoyl-[acyl-carrier-protein]. Its function is as follows. Catalyzes the radical-mediated insertion of two sulfur atoms into the C-6 and C-8 positions of the octanoyl moiety bound to the lipoyl domains of lipoate-dependent enzymes, thereby converting the octanoylated domains into lipoylated derivatives. The chain is Lipoyl synthase from Bacillus pumilus (strain SAFR-032).